A 340-amino-acid chain; its full sequence is MTNKNAYAQSGVDVEAGYEVVERIKKHVARTERAGVMGALGGFGGMFDLSQTGVKEPVLISGTDGVGTKLMLAIQYDKHDTIGQDCVAMCVNDIVAAGAEPLYFLDYIATGKNEPAKLEQVVAGVAEGCVQSGAALIGGETAEMPGMYGEDDYDLAGFAVGVAEKSEIIDGSKVAEGDVLLGLTSSGIHSNGYSLVRRVFADYTGEEVLPELEGKKLKEVLLEPTRIYVKALLPLIKEKLVHGIAHITGGGFIENVPRMFADDLAAEIEEDKIPVLPIFKALEKYGHIKHQEMFEIFNMGLGMILAVAPENVDRVKELLDEPVYEVGRIVKKENESVLIK.

This sequence belongs to the AIR synthase family.

The protein resides in the cytoplasm. It carries out the reaction 2-formamido-N(1)-(5-O-phospho-beta-D-ribosyl)acetamidine + ATP = 5-amino-1-(5-phospho-beta-D-ribosyl)imidazole + ADP + phosphate + H(+). It functions in the pathway purine metabolism; IMP biosynthesis via de novo pathway; 5-amino-1-(5-phospho-D-ribosyl)imidazole from N(2)-formyl-N(1)-(5-phospho-D-ribosyl)glycinamide: step 2/2. The sequence is that of Phosphoribosylformylglycinamidine cyclo-ligase from Streptococcus sanguinis (strain SK36).